Here is a 155-residue protein sequence, read N- to C-terminus: Small ribosomal subunit protein bS6 (155 aa).

The segment at 94–155 (VKQEGPLPTP…TPELEEQVKS (62 aa)) is disordered. Residues 103 to 112 (PRSSNKSSNQ) are compositionally biased toward polar residues. Basic and acidic residues predominate over residues 113–141 (AEKKENENIDSANKSEPKADETDNKKKIT).

The protein belongs to the bacterial ribosomal protein bS6 family.

In terms of biological role, binds together with bS18 to 16S ribosomal RNA. The protein is Small ribosomal subunit protein bS6 of Prochlorococcus marinus (strain MIT 9515).